A 469-amino-acid polypeptide reads, in one-letter code: MANGRVVQVMGPVVDVEFDRGHLPAIYNAIKIQHKAQSAGERDIDLTVEVATHLGDNLVRTVAMSSTDGLVRGMEAVDTGAAISVPVGAITLGRVFNVLGEPIDLQELGQVDRRDPIHRKAPEFVDQATTVEILETGIKVIDLLAPYIKGGKIGLFGGAGVGKTVTIQELINNIAQEHGGISVFAGVGERTREGNDLYHEMKDAGVLPKTAMVFGQMNEPPGARLRVALTGLTMAEYFRDEEGRDVLLFVDNIFRFTQAGSEVSALLGRMPSAVGYQPTLATEMGQLQERITSTKKGSVTSIQAIYVPADDYTDPAPATTFAHLDATTNLERSIAELGIFPAVDPLASTSRALAPDIVGQEHYDVARSVQKILQRYKELQDIIAILGMDELSDDDKQVVGRARRIQRFLSQSFHVAEQFTGNPGQYVPLKETVRSFKEILEGKHDHLPEGAFLYVGTIEEAVEKAKKMA.

Residue 157–164 (GGAGVGKT) coordinates ATP.

It belongs to the ATPase alpha/beta chains family. As to quaternary structure, F-type ATPases have 2 components, CF(1) - the catalytic core - and CF(0) - the membrane proton channel. CF(1) has five subunits: alpha(3), beta(3), gamma(1), delta(1), epsilon(1). CF(0) has three main subunits: a(1), b(2) and c(9-12). The alpha and beta chains form an alternating ring which encloses part of the gamma chain. CF(1) is attached to CF(0) by a central stalk formed by the gamma and epsilon chains, while a peripheral stalk is formed by the delta and b chains.

The protein resides in the cell membrane. It carries out the reaction ATP + H2O + 4 H(+)(in) = ADP + phosphate + 5 H(+)(out). Produces ATP from ADP in the presence of a proton gradient across the membrane. The catalytic sites are hosted primarily by the beta subunits. This is ATP synthase subunit beta from Brevibacillus brevis (strain 47 / JCM 6285 / NBRC 100599).